Consider the following 484-residue polypeptide: mRNA decay activator protein ZFP36L2 (484 aa).

Phosphoserine occurs at positions 57 and 127. A disordered region spans residues 100-152 (YGQLKEPSGGSGTALVTKESKFRDRSFSENGERSQHLLHLQQQQKGGSGSQIN). Positions 117-134 (KESKFRDRSFSENGERSQ) are enriched in basic and acidic residues. Residues 155–160 (RYKTEL) carry the RNA-binding motif. C3H1-type zinc fingers lie at residues 155–183 (RYKT…HGFH) and 193–221 (KYKT…HNAD). The interval 172-213 (YGEKCQFAHGFHELRSLTRHPKYKTELCRTFHTIGFCPYGPR) is RNA-binding. Disordered regions lie at residues 261–304 (SLSF…SCSS) and 395–484 (QQGL…ISDD). Residues 401–418 (PAPPPAQPPAAPAPPSPP) show a composition bias toward pro residues. Positions 449–468 (YLSGSLSSGSLSGSESPSLD) are enriched in low complexity. Phosphoserine; by RPS6KA1 is present on residues Ser480 and Ser482.

Associates with the cytoplasmic CCR4-NOT deadenylase to trigger ARE-containing mRNA deadenylation and decay processes. Interacts with CNOT7; this interaction is inhibited in response to phorbol 12-myristate 13-acetate (PMA) treatment in a p38 MAPK-dependent manner. Interacts with CNOT6L. Post-translationally, phosphorylated by RPS6KA1 at Ser-480 and Ser-482 upon phorbol 12-myristate 13-acetate (PMA) treatment; this phosphorylation results in dissociation of the CCR4-NOT-deadenylase complex and induces p38 MAPK-mediated stabilization of the low-density lipoprotein (LDL) receptor (LDLR) mRNA. Phosphorylation occurs during early preadipocyte differentiation. Expressed in preadipocytes and adipocytes (at protein level). Expressed at highest level in lymphoid tissues such as thymus, spleen, lung, uterus, ovary, small and large intestine, mammary gland, fat and bone marrow. Expressed at intermediate level in kidney, heart, adrenal, eye and fetal liver. Weakly expressed in brain, skeletal muscle and liver. Expressed through B lymphocyte development. Expressed in superior cervical ganglion (SCG) and dorsal root ganglion (DRG). Expressed in embryonic stem cells (ESCs). Expressed in oocytes.

The protein localises to the nucleus. It localises to the cytoplasm. Functionally, zinc-finger RNA-binding protein that destabilizes several cytoplasmic AU-rich element (ARE)-containing mRNA transcripts by promoting their poly(A) tail removal or deadenylation, and hence provide a mechanism for attenuating protein synthesis. Acts as a 3'-untranslated region (UTR) ARE mRNA-binding adapter protein to communicate signaling events to the mRNA decay machinery. Functions by recruiting the CCR4-NOT deadenylase complex and probably other components of the cytoplasmic RNA decay machinery to the bound ARE-containing mRNAs, and hence promotes ARE-mediated mRNA deadenylation and decay processes. Binds to 3'-UTR ARE of numerous mRNAs. Promotes ARE-containing mRNA decay of the low-density lipoprotein (LDL) receptor (LDLR) mRNA in response to phorbol 12-myristate 13-acetate (PMA) treatment in a p38 MAPK-dependent manner. Positively regulates early adipogenesis by promoting ARE-mediated mRNA decay of immediate early genes (IEGs). Plays a role in mature peripheral neuron integrity by promoting ARE-containing mRNA decay of the transcriptional repressor REST mRNA. Plays a role in ovulation and oocyte meiotic maturation by promoting ARE-mediated mRNA decay of the luteinizing hormone receptor LHCGR mRNA. Acts as a negative regulator of erythroid cell differentiation: promotes glucocorticoid-induced self-renewal of erythroid cells by binding mRNAs that are induced or highly expressed during terminal erythroid differentiation and promotes their degradation, preventing erythroid cell differentiation. In association with ZFP36L1 maintains quiescence on developing B lymphocytes by promoting ARE-mediated decay of several mRNAs encoding cell cycle regulators that help B cells progress through the cell cycle, and hence ensuring accurate variable-diversity-joining (VDJ) recombination process and functional immune cell formation. Together with ZFP36L1 is also necessary for thymocyte development and prevention of T-cell acute lymphoblastic leukemia (T-ALL) transformation by promoting ARE-mediated mRNA decay of the oncogenic transcription factor NOTCH1 mRNA. This Mus musculus (Mouse) protein is mRNA decay activator protein ZFP36L2.